The following is a 359-amino-acid chain: MRQILIAVAIALTVSILLTPALIRLFTRQGFGHHTREDGPPTHHAKRGTPSMGGVAIIAGIWAGYLGTHLAGLAFDGEGISASGLLVLSLATVLGIVGFLDDLIKIRRSRNLGLNKTAKTIGQVAAAVLFGVLALGFRNANGLTPASADLSYVREIATVTLAPGLFVLFCVVVVSAWSNAVNFTDGLDGLAAGSMAMVTAAYVLITFWQYRNACVTAPGLGCYNVRDPLDLAIVAAATAGACIGFLWWNAAPAKIFMGDTGSLALGGIIAGISVTSRTEILAVVLGSLFVAEVSSVVLQILTFRTTGRRVFRMAPFHHHFELAGWAETTVIIRFWLLTAIACGLGVALFYGEWLAAIGA.

A run of 10 helical transmembrane segments spans residues 3–23 (QILI…PALI), 55–75 (VAII…GLAF), 80–100 (ISAS…VGFL), 117–137 (TAKT…ALGF), 156–176 (IATV…VVSA), 187–207 (LDGL…LITF), 231–251 (LAIV…WNAA), 255–275 (IFMG…ISVT), 280–300 (ILAV…VLQI), and 334–354 (FWLL…GEWL).

The protein belongs to the glycosyltransferase 4 family. MraY subfamily. Mg(2+) serves as cofactor.

The protein resides in the cell membrane. The enzyme catalyses UDP-N-acetyl-alpha-D-muramoyl-L-alanyl-gamma-D-glutamyl-meso-2,6-diaminopimeloyl-D-alanyl-D-alanine + di-trans,octa-cis-undecaprenyl phosphate = di-trans,octa-cis-undecaprenyl diphospho-N-acetyl-alpha-D-muramoyl-L-alanyl-D-glutamyl-meso-2,6-diaminopimeloyl-D-alanyl-D-alanine + UMP. The protein operates within cell wall biogenesis; peptidoglycan biosynthesis. Catalyzes the initial step of the lipid cycle reactions in the biosynthesis of the cell wall peptidoglycan: transfers peptidoglycan precursor phospho-MurNAc-pentapeptide from UDP-MurNAc-pentapeptide onto the lipid carrier undecaprenyl phosphate, yielding undecaprenyl-pyrophosphoryl-MurNAc-pentapeptide, known as lipid I. The sequence is that of Phospho-N-acetylmuramoyl-pentapeptide-transferase from Mycobacterium avium (strain 104).